Reading from the N-terminus, the 1293-residue chain is DNA-directed RNA polymerase subunit beta' (1293 aa).

Residues cysteine 60, cysteine 62, cysteine 75, and cysteine 78 each contribute to the Zn(2+) site. Mg(2+) contacts are provided by aspartate 535, aspartate 537, and aspartate 539. Cysteine 873, cysteine 950, cysteine 957, and cysteine 960 together coordinate Zn(2+).

This sequence belongs to the RNA polymerase beta' chain family. In terms of assembly, the RNAP catalytic core consists of 2 alpha, 1 beta, 1 beta' and 1 omega subunit. When a sigma factor is associated with the core the holoenzyme is formed, which can initiate transcription. Mg(2+) serves as cofactor. Requires Zn(2+) as cofactor.

The catalysed reaction is RNA(n) + a ribonucleoside 5'-triphosphate = RNA(n+1) + diphosphate. In terms of biological role, DNA-dependent RNA polymerase catalyzes the transcription of DNA into RNA using the four ribonucleoside triphosphates as substrates. The sequence is that of DNA-directed RNA polymerase subunit beta' from Cutibacterium acnes (strain DSM 16379 / KPA171202) (Propionibacterium acnes).